Reading from the N-terminus, the 394-residue chain is Flavin-dependent monooxygenase, oxygenase subunit HsaA (394 aa).

Residues Trp84, 118 to 120, 141 to 143, Arg263, 346 to 347, and 368 to 369 contribute to the FMN site; these read SSY, WSS, AT, and HA.

It belongs to the HpaH/HsaA monooxygenase family. In terms of assembly, homotetramer under anaerobic conditions. HsaAB monooxygenase consists of an oxygenase component HsaA and a reductase component HsaB.

The enzyme catalyses 3-hydroxy-9,10-secoandrosta-1,3,5(10)-triene-9,17-dione + FMNH2 + O2 = 3,4-dihydroxy-9,10-secoandrosta-1,3,5(10)-triene-9,17-dione + FMN + H2O + H(+). It functions in the pathway lipid metabolism; steroid biosynthesis. Catalyzes the o-hydroxylation of 3-hydroxy-9,10-secoandrosta-1,3,5(10)-triene-9,17-dione (3-HSA) to 3,4-dihydroxy-9,10-secoandrosta-1,3,5(10)-triene-9,17-dione (3,4-DHSA) in the catabolism of cholesterol. In Mycobacterium tuberculosis (strain CDC 1551 / Oshkosh), this protein is Flavin-dependent monooxygenase, oxygenase subunit HsaA.